A 583-amino-acid polypeptide reads, in one-letter code: Malonate--CoA ligase ACSF3, mitochondrial (583 aa).

The N-terminal 27 residues, 1–27 (MPPHLALPFRRLFWSLASSQLIPRRHR), are a transit peptide targeting the mitochondrion. ATP is bound by residues 202 to 210 (TSGTTGRPK), aspartate 455, arginine 469, and lysine 561.

It belongs to the ATP-dependent AMP-binding enzyme family.

The protein localises to the mitochondrion. The enzyme catalyses tetracosanoate + ATP + CoA = tetracosanoyl-CoA + AMP + diphosphate. It carries out the reaction malonate + ATP + CoA = malonyl-CoA + AMP + diphosphate. Its function is as follows. Catalyzes the initial reaction in intramitochondrial fatty acid synthesis, by activating malonate and methylmalonate, but not acetate, into their respective CoA thioester. May have some preference toward very-long-chain substrates. This Mus musculus (Mouse) protein is Malonate--CoA ligase ACSF3, mitochondrial.